We begin with the raw amino-acid sequence, 398 residues long: Acetate kinase (398 aa).

Residue Asn7 participates in Mg(2+) binding. ATP is bound at residue Lys14. Arg91 provides a ligand contact to substrate. Asp148 functions as the Proton donor/acceptor in the catalytic mechanism. ATP contacts are provided by residues His208–Gly212, Asp282–Arg284, and Gly330–Asn334. Glu383 serves as a coordination point for Mg(2+).

The protein belongs to the acetokinase family. As to quaternary structure, homodimer. Mg(2+) serves as cofactor. The cofactor is Mn(2+).

The protein resides in the cytoplasm. The catalysed reaction is acetate + ATP = acetyl phosphate + ADP. The protein operates within metabolic intermediate biosynthesis; acetyl-CoA biosynthesis; acetyl-CoA from acetate: step 1/2. Its function is as follows. Catalyzes the formation of acetyl phosphate from acetate and ATP. Can also catalyze the reverse reaction. In Carboxydothermus hydrogenoformans (strain ATCC BAA-161 / DSM 6008 / Z-2901), this protein is Acetate kinase.